Consider the following 108-residue polypeptide: Thiosulfate sulfurtransferase GlpE (108 aa).

The Rhodanese domain maps to 17–105; the sequence is HQGAAVLVDI…WHRHFPADVA (89 aa). C65 functions as the Cysteine persulfide intermediate in the catalytic mechanism.

The protein belongs to the GlpE family.

The protein localises to the cytoplasm. It catalyses the reaction thiosulfate + hydrogen cyanide = thiocyanate + sulfite + 2 H(+). It carries out the reaction thiosulfate + [thioredoxin]-dithiol = [thioredoxin]-disulfide + hydrogen sulfide + sulfite + 2 H(+). In terms of biological role, transferase that catalyzes the transfer of sulfur from thiosulfate to thiophilic acceptors such as cyanide or dithiols. May function in a CysM-independent thiosulfate assimilation pathway by catalyzing the conversion of thiosulfate to sulfite, which can then be used for L-cysteine biosynthesis. The polypeptide is Thiosulfate sulfurtransferase GlpE (Salmonella arizonae (strain ATCC BAA-731 / CDC346-86 / RSK2980)).